The primary structure comprises 105 residues: Large ribosomal subunit protein uL24 (105 aa).

This sequence belongs to the universal ribosomal protein uL24 family. As to quaternary structure, part of the 50S ribosomal subunit.

Functionally, one of two assembly initiator proteins, it binds directly to the 5'-end of the 23S rRNA, where it nucleates assembly of the 50S subunit. One of the proteins that surrounds the polypeptide exit tunnel on the outside of the subunit. The chain is Large ribosomal subunit protein uL24 from Methylococcus capsulatus (strain ATCC 33009 / NCIMB 11132 / Bath).